Reading from the N-terminus, the 235-residue chain is MPKLSKRLAGLASKIEDRVYEPLEAIALVKDNATAKFDETMEAHVRLGIDPKYTDQQLRTTVALPNGTGQTVRIAVVTRGEKVAEAKAAGAELAGDEDLVETIAKGEMEFDLLIATPDMMPKVAKLGRVLGPRGLMPNPKAGTVTIDLAGAIQEFKAGKLEFRADRTGIVHVRFGKASFTAEALLQNLKTLQETIDRNKPSGAKGRYWKSLYVTSTMGPSVEVDFSALQDIEQGS.

The protein belongs to the universal ribosomal protein uL1 family. As to quaternary structure, part of the 50S ribosomal subunit.

Binds directly to 23S rRNA. The L1 stalk is quite mobile in the ribosome, and is involved in E site tRNA release. Functionally, protein L1 is also a translational repressor protein, it controls the translation of the L11 operon by binding to its mRNA. The chain is Large ribosomal subunit protein uL1 from Parasynechococcus marenigrum (strain WH8102).